The chain runs to 1042 residues: Isoleucine--tRNA ligase (1042 aa).

A 'HIGH' region motif is present at residues 59-69; the sequence is PFANGLPHYGH. Positions 619-623 match the 'KMSKS' region motif; that stretch reads KMSKS. Lysine 622 is a binding site for ATP.

The protein belongs to the class-I aminoacyl-tRNA synthetase family. IleS type 2 subfamily. As to quaternary structure, monomer. Requires Zn(2+) as cofactor.

It is found in the cytoplasm. It catalyses the reaction tRNA(Ile) + L-isoleucine + ATP = L-isoleucyl-tRNA(Ile) + AMP + diphosphate. In terms of biological role, catalyzes the attachment of isoleucine to tRNA(Ile). As IleRS can inadvertently accommodate and process structurally similar amino acids such as valine, to avoid such errors it has two additional distinct tRNA(Ile)-dependent editing activities. One activity is designated as 'pretransfer' editing and involves the hydrolysis of activated Val-AMP. The other activity is designated 'posttransfer' editing and involves deacylation of mischarged Val-tRNA(Ile). The sequence is that of Isoleucine--tRNA ligase from Nocardia farcinica (strain IFM 10152).